Reading from the N-terminus, the 359-residue chain is Alanine racemase, biosynthetic (359 aa).

Residue lysine 34 is the Proton acceptor; specific for D-alanine of the active site. At lysine 34 the chain carries N6-(pyridoxal phosphate)lysine. A substrate-binding site is contributed by arginine 129. The active-site Proton acceptor; specific for L-alanine is the tyrosine 255. A substrate-binding site is contributed by methionine 303.

This sequence belongs to the alanine racemase family. Requires pyridoxal 5'-phosphate as cofactor.

It catalyses the reaction L-alanine = D-alanine. The protein operates within amino-acid biosynthesis; D-alanine biosynthesis; D-alanine from L-alanine: step 1/1. It functions in the pathway cell wall biogenesis; peptidoglycan biosynthesis. Its function is as follows. Catalyzes the interconversion of L-alanine and D-alanine. Provides the D-alanine required for cell wall biosynthesis. The sequence is that of Alanine racemase, biosynthetic (alr) from Escherichia coli O157:H7.